The chain runs to 481 residues: Surface lipoprotein assembly modifier 1 (481 aa).

The first 23 residues, 1–23, serve as a signal peptide directing secretion; that stretch reads MSIQTKFILFLSSSLFLTPYSVA. An N-terminal domain region spans residues 25-192; that stretch reads EKSPQPHDGR…QYLSALNQRD (168 aa). Positions 193 to 481 are C-terminal probable beta barrel; sequence QWKIQGGFSF…RIYVEISKTF (289 aa). 14 beta stranded membrane passes run 194-204, 233-243, 248-258, 271-281, 285-295, 315-325, 329-338, 353-363, 368-377, 390-400, 405-414, 432-441, 448-458, and 471-481; these read WKIQGGFSFLN, SYFGNAEKKWS, HFTKLSLEGSG, NARAGVGLGYQ, FELSLMPFTEK, SGARLDLSNWL, WQISTALEYG, YLASATLLYLA, YWFGGADYNR, KNVRLGWGQEW, STRLILNYAR, YASVLTIWHR, ITPKLSWSYQK, and NRIYVEISKTF.

The protein belongs to the Slam family.

The protein resides in the cell outer membrane. In terms of biological role, required for correct export to the cell surface of some cell outer membrane lipoproteins. The polypeptide is Surface lipoprotein assembly modifier 1 (Haemophilus influenzae (strain ATCC 51907 / DSM 11121 / KW20 / Rd)).